A 297-amino-acid chain; its full sequence is Protoheme IX farnesyltransferase (297 aa).

A run of 9 helical transmembrane segments spans residues 16–36 (VVAL…PGVP), 45–65 (VLGF…NQLL), 93–113 (VFAS…VNLI), 114–134 (TAVL…VYLK), 141–161 (IVIG…AVTG), 172–192 (SLLV…LAIF), 223–243 (VVLA…AFYL), 244–264 (GGAI…LDPP), and 277–297 (IVYL…LPWL).

Belongs to the UbiA prenyltransferase family. Protoheme IX farnesyltransferase subfamily.

It localises to the cell inner membrane. It catalyses the reaction heme b + (2E,6E)-farnesyl diphosphate + H2O = Fe(II)-heme o + diphosphate. It participates in porphyrin-containing compound metabolism; heme O biosynthesis; heme O from protoheme: step 1/1. Functionally, converts heme B (protoheme IX) to heme O by substitution of the vinyl group on carbon 2 of heme B porphyrin ring with a hydroxyethyl farnesyl side group. This chain is Protoheme IX farnesyltransferase, found in Stenotrophomonas maltophilia (strain R551-3).